Reading from the N-terminus, the 172-residue chain is NAD(P)H-quinone oxidoreductase subunit J (172 aa).

Belongs to the complex I 30 kDa subunit family. As to quaternary structure, NDH-1 can be composed of about 15 different subunits; different subcomplexes with different compositions have been identified which probably have different functions.

It localises to the cellular thylakoid membrane. It carries out the reaction a plastoquinone + NADH + (n+1) H(+)(in) = a plastoquinol + NAD(+) + n H(+)(out). The enzyme catalyses a plastoquinone + NADPH + (n+1) H(+)(in) = a plastoquinol + NADP(+) + n H(+)(out). Functionally, NDH-1 shuttles electrons from an unknown electron donor, via FMN and iron-sulfur (Fe-S) centers, to quinones in the respiratory and/or the photosynthetic chain. The immediate electron acceptor for the enzyme in this species is believed to be plastoquinone. Couples the redox reaction to proton translocation, and thus conserves the redox energy in a proton gradient. Cyanobacterial NDH-1 also plays a role in inorganic carbon-concentration. The sequence is that of NAD(P)H-quinone oxidoreductase subunit J from Synechococcus sp. (strain ATCC 27144 / PCC 6301 / SAUG 1402/1) (Anacystis nidulans).